Consider the following 501-residue polypeptide: MAINAQEISALIKKQIENFQPNFDVTETGIVTYIGDGIARARGLDNAMSGELLEFENGAYGMAQNLESNDVGIIILGDFSAIREGDVVKRTGKIMEVPVGEALIGRVVNPLGQPVDGLGDIETTGFRPVETPAPGVMQRKSVSEPLQTGLKAIDALVPIGRGQRELIIGDRQTGKTSVAIDAILNQKGQDMICIYVAIGQKESTVRTQVETLRRYGALDYTIVVTASASQPSPLLFIAPYAGVAMAEEFMYQGKHVLIVYDDLSKQAVAYRELSLLLRRPPGREAYPGDVFYLHSRLLERSAKVSDDLGGGSITALPFIETQAGDISAYIATNVISITDGQIFLQENLFNSGIRPAIDAGSSVSRVGGSAQIKAMKKVAGTLRLDLASYRELEAFTQFGSDLDAATQAKLNRGRRTVEILKQPLHKPLPVEKQVVILYALTHGFLDDVPVDDILAFEEALYDYFDVHYDNLFETIRTTKDLPEEADLDAAIKAFKDQSNFK.

169 to 176 (GDRQTGKT) is an ATP binding site.

The protein belongs to the ATPase alpha/beta chains family. In terms of assembly, F-type ATPases have 2 components, CF(1) - the catalytic core - and CF(0) - the membrane proton channel. CF(1) has five subunits: alpha(3), beta(3), gamma(1), delta(1), epsilon(1). CF(0) has three main subunits: a(1), b(2) and c(9-12). The alpha and beta chains form an alternating ring which encloses part of the gamma chain. CF(1) is attached to CF(0) by a central stalk formed by the gamma and epsilon chains, while a peripheral stalk is formed by the delta and b chains.

The protein resides in the cell membrane. It carries out the reaction ATP + H2O + 4 H(+)(in) = ADP + phosphate + 5 H(+)(out). In terms of biological role, produces ATP from ADP in the presence of a proton gradient across the membrane. The alpha chain is a regulatory subunit. This chain is ATP synthase subunit alpha, found in Streptococcus pyogenes serotype M2 (strain MGAS10270).